A 409-amino-acid chain; its full sequence is Imidazolonepropionase (409 aa).

The Fe(3+) site is built by His-70 and His-72. Zn(2+) is bound by residues His-70 and His-72. 4-imidazolone-5-propanoate-binding residues include Arg-79, Tyr-137, and His-164. An N-formimidoyl-L-glutamate-binding site is contributed by Tyr-137. His-225 contacts Fe(3+). His-225 provides a ligand contact to Zn(2+). Residue Gln-228 participates in 4-imidazolone-5-propanoate binding. Asn-314 and Gly-316 together coordinate N-formimidoyl-L-glutamate. Residue Thr-317 participates in 4-imidazolone-5-propanoate binding.

The protein belongs to the metallo-dependent hydrolases superfamily. HutI family. The cofactor is Zn(2+). Fe(3+) serves as cofactor.

The protein resides in the cytoplasm. The catalysed reaction is 4-imidazolone-5-propanoate + H2O = N-formimidoyl-L-glutamate. The protein operates within amino-acid degradation; L-histidine degradation into L-glutamate; N-formimidoyl-L-glutamate from L-histidine: step 3/3. Catalyzes the hydrolytic cleavage of the carbon-nitrogen bond in imidazolone-5-propanoate to yield N-formimidoyl-L-glutamate. It is the third step in the universal histidine degradation pathway. This chain is Imidazolonepropionase, found in Paenarthrobacter aurescens (strain TC1).